A 397-amino-acid polypeptide reads, in one-letter code: Subtilisin-like protease 3 (397 aa).

The signal sequence occupies residues 1 to 19 (MGCIKVISVFLAAIAAVDA). A propeptide spanning residues 20-116 (RAFFHNRGGS…VEHDRVVKLA (97 aa)) is cleaved from the precursor. In terms of domain architecture, Inhibitor I9 spans 35 to 116 (SYIVVMKDGV…VEHDRVVKLA (82 aa)). One can recognise a Peptidase S8 domain in the interval 126-397 (TWGLGRVSHR…NRLLYNGSGQ (272 aa)). Catalysis depends on charge relay system residues aspartate 158 and histidine 189. Residue asparagine 250 is glycosylated (N-linked (GlcNAc...) asparagine). Serine 344 functions as the Charge relay system in the catalytic mechanism. An N-linked (GlcNAc...) asparagine glycan is attached at asparagine 393.

Belongs to the peptidase S8 family.

The protein localises to the secreted. Its function is as follows. Secreted subtilisin-like serine protease with keratinolytic activity that contributes to pathogenicity. The chain is Subtilisin-like protease 3 (SUB3) from Trichophyton tonsurans (Scalp ringworm fungus).